The following is a 348-amino-acid chain: Dihydroorotase (348 aa).

Positions 14 and 16 each coordinate Zn(2+). Substrate-binding positions include 16–18 (HLR) and N42. Zn(2+) is bound by residues K100, H137, and H175. At K100 the chain carries N6-carboxylysine. Position 137 (H137) interacts with substrate. Residue L220 coordinates substrate. D248 serves as a coordination point for Zn(2+). The active site involves D248. 2 residues coordinate substrate: H252 and A264.

Belongs to the metallo-dependent hydrolases superfamily. DHOase family. Class II DHOase subfamily. In terms of assembly, homodimer. It depends on Zn(2+) as a cofactor.

The catalysed reaction is (S)-dihydroorotate + H2O = N-carbamoyl-L-aspartate + H(+). The protein operates within pyrimidine metabolism; UMP biosynthesis via de novo pathway; (S)-dihydroorotate from bicarbonate: step 3/3. In terms of biological role, catalyzes the reversible cyclization of carbamoyl aspartate to dihydroorotate. The sequence is that of Dihydroorotase from Pseudomonas putida (strain ATCC 47054 / DSM 6125 / CFBP 8728 / NCIMB 11950 / KT2440).